The sequence spans 517 residues: GMP synthase [glutamine-hydrolyzing] (517 aa).

The Glutamine amidotransferase type-1 domain maps to 9–199 (RILILDFGSQ…VLGVCGCERL (191 aa)). C86 functions as the Nucleophile in the catalytic mechanism. Active-site residues include H173 and E175. Residues 200-392 (WTSESIIEDA…LGLPYEMLYR (193 aa)) form the GMPS ATP-PPase domain. 227 to 233 (SGGVDSS) is a binding site for ATP.

Homodimer.

The catalysed reaction is XMP + L-glutamine + ATP + H2O = GMP + L-glutamate + AMP + diphosphate + 2 H(+). It participates in purine metabolism; GMP biosynthesis; GMP from XMP (L-Gln route): step 1/1. Catalyzes the synthesis of GMP from XMP. The polypeptide is GMP synthase [glutamine-hydrolyzing] (Vibrio vulnificus (strain YJ016)).